Here is a 782-residue protein sequence, read N- to C-terminus: Protein PAT1 homolog 1 (782 aa).

4 disordered regions span residues 96-153, 177-217, 332-372, and 460-481; these read GPKH…HSKP, LPES…YSAP, VREH…SKHM, and EVDS…GKHL. Over residues 108 to 117 the composition is skewed to low complexity; it reads SGSFSRESSS. Positions 208–217 are enriched in polar residues; the sequence is GGSQLTYSAP. The span at 335–347 shows a compositional bias: basic residues; it reads HKHKSSHRSRKNR. Residues 348–366 show a composition bias toward polar residues; sequence GLSQQTSDAASQKSETGLQ. A compositionally biased stretch (basic and acidic residues) spans 471–481; it reads SGDHKGSGKHL.

Interacts with AFPH2/NINJA. In terms of tissue distribution, expressed in root vasculature, shoot apical meristem (SAM) and leaves.

Functionally, activator of mRNA decapping. Involved in mRNA decay via decapping. Involved in the regulation of root stem cell niche identity. Maintains root stem cell niche stability through the interaction with the negative regulator of jasmonate signaling AFPH2/NINJA, and the regulation of cell division. In Arabidopsis thaliana (Mouse-ear cress), this protein is Protein PAT1 homolog 1.